The primary structure comprises 103 residues: NADH-quinone oxidoreductase subunit K (103 aa).

Helical transmembrane passes span 1–21, 29–49, and 62–82; these read MIVPLSHVLAVAALLFAVGGV, ILLILIGVEFMLAAAGLAFAG, and AVIIIMGLASAEAGLGLALLV. Residues 84–103 form a disordered region; sequence GRRGGGTDRADSYDRLGEES. Residues 88–103 show a composition bias toward basic and acidic residues; that stretch reads GGTDRADSYDRLGEES.

The protein belongs to the complex I subunit 4L family. In terms of assembly, NDH-1 is composed of 14 different subunits. Subunits NuoA, H, J, K, L, M, N constitute the membrane sector of the complex.

It localises to the cell inner membrane. The catalysed reaction is a quinone + NADH + 5 H(+)(in) = a quinol + NAD(+) + 4 H(+)(out). Functionally, NDH-1 shuttles electrons from NADH, via FMN and iron-sulfur (Fe-S) centers, to quinones in the respiratory chain. The immediate electron acceptor for the enzyme in this species is believed to be ubiquinone. Couples the redox reaction to proton translocation (for every two electrons transferred, four hydrogen ions are translocated across the cytoplasmic membrane), and thus conserves the redox energy in a proton gradient. The chain is NADH-quinone oxidoreductase subunit K from Solidesulfovibrio magneticus (strain ATCC 700980 / DSM 13731 / RS-1) (Desulfovibrio magneticus).